The chain runs to 316 residues: Melanocyte-stimulating hormone receptor (316 aa).

At 1 to 37 (MAVQGSQRRLLGSLNSTPTAIPQLGLAANQTGARCLE) the chain is on the extracellular side. Residue Asn-29 is glycosylated (N-linked (GlcNAc...) asparagine). The chain crosses the membrane as a helical span at residues 38 to 63 (VSIPDGLFLSLGLVSLVENVLVVATI). Topologically, residues 64 to 72 (AKNRNLHSP) are cytoplasmic. Residues 73-93 (MYCFICCLALSDLLVSGSNVV) traverse the membrane as a helical segment. The Extracellular segment spans residues 94-117 (DTLLLLLEAGALAARAAVLQQLDN). The chain crosses the membrane as a helical span at residues 118 to 139 (VIDVITCSSMLSSLCFLGAIAV). Topologically, residues 140-162 (DRYISIFYALRYRSIVTLPRARR) are cytoplasmic. The chain crosses the membrane as a helical span at residues 163-182 (AVAAIWVASVLFSTLFIAYY). At 183–190 (DHTAVLLC) the chain is on the extracellular side. Residues 191–210 (LVVFFLAMLVLMAVLYVHML) traverse the membrane as a helical segment. Residues 211 to 239 (ARACQHAQGIARLHKRQRPVHKGFGLKGP) lie on the Cytoplasmic side of the membrane. The chain crosses the membrane as a helical span at residues 240-265 (VTLTILLGIFFLCWGPFFLHLTLIVL). Residues 266–278 (CPEHPTCGCIFKN) are Extracellular-facing. Residues 279–299 (FNLFLALIICNAIIDPLIYAF) form a helical membrane-spanning segment. The Cytoplasmic segment spans residues 300-316 (HSQELRRTLKEVLTCSW). Cys-314 carries the S-palmitoyl cysteine lipid modification.

The protein belongs to the G-protein coupled receptor 1 family. In terms of assembly, interacts with MGRN1, but does not undergo MGRN1-mediated ubiquitination; this interaction competes with GNAS-binding and thus inhibits agonist-induced cAMP production. Interacts with OPN3; the interaction results in a decrease in MC1R-mediated cAMP signaling and ultimately a decrease in melanin production in melanocytes.

It localises to the cell membrane. Receptor for MSH (alpha, beta and gamma) and ACTH. The activity of this receptor is mediated by G proteins which activate adenylate cyclase. Mediates melanogenesis, the production of eumelanin (black/brown) and phaeomelanin (red/yellow), via regulation of cAMP signaling in melanocytes. The sequence is that of Melanocyte-stimulating hormone receptor (MC1R) from Gorilla gorilla gorilla (Western lowland gorilla).